The primary structure comprises 315 residues: Indoleacetate decarboxylase activating enzyme (315 aa).

The 291-residue stretch at 21–311 (HDGPGIRTNV…ADIIEAHGVK (291 aa)) folds into the Radical SAM core domain. Positions 35, 39, 42, 61, 64, 67, 71, 98, 101, 106, and 110 each coordinate [4Fe-4S] cluster. 4Fe-4S ferredoxin-type domains follow at residues 52–81 (PQLL…AITD) and 89–120 (GYVH…IAGE). Residues Gly-149, 198–200 (DCK), and His-271 each bind S-adenosyl-L-methionine.

It belongs to the organic radical-activating enzymes family. The cofactor is [4Fe-4S] cluster.

The enzyme catalyses glycyl-[protein] + reduced [flavodoxin] + S-adenosyl-L-methionine = glycin-2-yl radical-[protein] + semiquinone [flavodoxin] + 5'-deoxyadenosine + L-methionine + H(+). Functionally, catalyzes activation of the indoleacetate decarboxylase OsIAD under anaerobic conditions by generation of an organic free radical on a glycine residue, via a homolytic cleavage of S-adenosyl-L-methionine (SAM). The polypeptide is Indoleacetate decarboxylase activating enzyme (Tractidigestivibacter scatoligenes (Olsenella scatoligenes)).